Here is a 734-residue protein sequence, read N- to C-terminus: 1,4-alpha-glucan branching enzyme GlgB (734 aa).

Asp-413 functions as the Nucleophile in the catalytic mechanism. Glu-466 functions as the Proton donor in the catalytic mechanism.

It belongs to the glycosyl hydrolase 13 family. GlgB subfamily. In terms of assembly, monomer.

The enzyme catalyses Transfers a segment of a (1-&gt;4)-alpha-D-glucan chain to a primary hydroxy group in a similar glucan chain.. It functions in the pathway glycan biosynthesis; glycogen biosynthesis. Catalyzes the formation of the alpha-1,6-glucosidic linkages in glycogen by scission of a 1,4-alpha-linked oligosaccharide from growing alpha-1,4-glucan chains and the subsequent attachment of the oligosaccharide to the alpha-1,6 position. This is 1,4-alpha-glucan branching enzyme GlgB from Nitrosomonas europaea (strain ATCC 19718 / CIP 103999 / KCTC 2705 / NBRC 14298).